The chain runs to 175 residues: MKITVEIPPDMEKLLVKKCEESGVSPSEFVYLLLEWYFFKRGKKAETTGELNEFLRVAKEVADERVRFCKFSDGAYCAIETFEDVFSDKEPTPISPYRCLFCLYYVDKRKDKRRTEFRELTEAKMYDLAKIAAKFVVELYGDRLGYRPKTKSEEIVEKQEKKDEKLPKVKKLLDW.

This is an uncharacterized protein from Archaeoglobus fulgidus (strain ATCC 49558 / DSM 4304 / JCM 9628 / NBRC 100126 / VC-16).